An 858-amino-acid chain; its full sequence is Neural cell adhesion molecule 1 (858 aa).

The first 19 residues, 1–19 (MLRTKDLIWTLFFLGTAVS), serve as a signal peptide directing secretion. Ig-like C2-type domains are found at residues 20–111 (LQVD…ATVN), 116–205 (QKLM…KDIQ), 212–302 (PTVQ…ASIH), 309–414 (PKIT…LEVQ), and 417–502 (PKLQ…ESLE). Topologically, residues 20–721 (LQVDIVPSQG…NGSPTAGLST (702 aa)) are extracellular. Intrachain disulfides connect Cys-41–Cys-96 and Cys-139–Cys-189. Heparin is bound by residues 152–156 (KHKGR) and 161–165 (KKDVR). Asn-222 is a glycosylation site (N-linked (GlcNAc...) asparagine). Cys-235 and Cys-288 are joined by a disulfide. N-linked (GlcNAc...) asparagine glycans are attached at residues Asn-316, Asn-348, Asn-434, Asn-460, and Asn-489. The cysteines at positions 330 and 396 are disulfide-linked. A disulfide bridge links Cys-437 with Cys-490. 2 Fibronectin type-III domains span residues 510–609 (TPSS…TQPV) and 611–706 (EPSA…SAQP). A helical transmembrane segment spans residues 722 to 739 (GAIVGILIVIFVLLLVVM). Residues 740–858 (DITCYFLNKC…TQTKENESKA (119 aa)) lie on the Cytoplasmic side of the membrane. Residues 765–858 (PGAKGKDMEE…TQTKENESKA (94 aa)) form a disordered region. Composition is skewed to basic and acidic residues over residues 768–809 (KGKD…HTEP) and 817–834 (EPEK…ESEA). Residues Ser-780 and Ser-784 each carry the phosphoserine modification.

In terms of assembly, interacts with MDK. Found in a complex with SLC39A6, SLC39A10 and with NCAM1; this complex controls NCAM1 phosphorylation and integration into focal adhesion complexes during epithelial-tomesenchymal transition. Interacts with synaptic plasticity regulator PANTS. Post-translationally, polysialylated by ST8SIA2 and ST8SIA4. Polysialylation modulates cell interactions by confering both attractive and repulsive properties that are highly regulated by ST8SIA2 and ST8SIA4. Polysialylation is formed on a-2,3-linked sialic acid of core glycans.

The protein localises to the cell membrane. Its function is as follows. This protein is a cell adhesion molecule involved in neuron-neuron adhesion, neurite fasciculation, outgrowth of neurites, etc. The protein is Neural cell adhesion molecule 1 of Rattus norvegicus (Rat).